A 1938-amino-acid polypeptide reads, in one-letter code: Myosin-13 (1938 aa).

The Myosin N-terminal SH3-like domain maps to 33–82; the sequence is DSKKACFVADNKEMYVKGMIQTRENDKVIVKTLDDRMLTLNNDQVFPMNP. In terms of domain architecture, Myosin motor spans 86 to 782; sequence DKIEDMAMMT…LLGLLEEMRD (697 aa). The residue at position 130 (lysine 130) is an N6,N6,N6-trimethyllysine. 179–186 serves as a coordination point for ATP; sequence GESGAGKT. Actin-binding stretches follow at residues 659 to 681 and 761 to 775; these read LNKL…IPNE and RFGN…GLLG. The region spanning 785–814 is the IQ domain; it reads LVTLMTSTQAVCRGYLMRVEFKKMMERRDS. A coiled-coil region spans residues 843-1938; the sequence is LLKSAEAEKE…RDVGSQKMEE (1096 aa). Residues 1917-1938 form a disordered region; the sequence is AESQVNKLRAKSRDVGSQKMEE. Over residues 1927–1938 the composition is skewed to basic and acidic residues; the sequence is KSRDVGSQKMEE.

It belongs to the TRAFAC class myosin-kinesin ATPase superfamily. Myosin family. Muscle myosin is a hexameric protein that consists of 2 heavy chain subunits (MHC), 2 alkali light chain subunits (MLC) and 2 regulatory light chain subunits (MLC-2). Specifically expressed in extraocular and laryngeal muscles.

The protein resides in the cytoplasm. Its subcellular location is the myofibril. Fast twitching myosin mediating the high-velocity and low-tension contractions of specific striated muscles. This Homo sapiens (Human) protein is Myosin-13 (MYH13).